Here is a 48-residue protein sequence, read N- to C-terminus: Small, acid-soluble spore protein P (48 aa).

Basic and acidic residues predominate over residues 1 to 12; the sequence is MTNKNDGKDMRK. The segment at 1–48 is disordered; the sequence is MTNKNDGKDMRKNAPKGAQPGQPEPLSGSKKVKNRNHTRQKHNSSHDM. Residues 30–48 are compositionally biased toward basic residues; that stretch reads KKVKNRNHTRQKHNSSHDM.

The protein belongs to the SspP family.

The protein localises to the spore core. This chain is Small, acid-soluble spore protein P, found in Bacillus licheniformis (strain ATCC 14580 / DSM 13 / JCM 2505 / CCUG 7422 / NBRC 12200 / NCIMB 9375 / NCTC 10341 / NRRL NRS-1264 / Gibson 46).